The sequence spans 348 residues: Protein RecA (348 aa).

G65–T72 contributes to the ATP binding site.

It belongs to the RecA family.

Its subcellular location is the cytoplasm. Can catalyze the hydrolysis of ATP in the presence of single-stranded DNA, the ATP-dependent uptake of single-stranded DNA by duplex DNA, and the ATP-dependent hybridization of homologous single-stranded DNAs. It interacts with LexA causing its activation and leading to its autocatalytic cleavage. The polypeptide is Protein RecA (Vibrio natriegens).